The following is a 343-amino-acid chain: Melanoma-associated antigen B18 (343 aa).

Positions 1–17 (MPRGQKSKLRAREKRHQ) are enriched in basic residues. The interval 1–102 (MPRGQKSKLR…LGSSREAEGW (102 aa)) is disordered. Residues 67–87 (APSTTNAIAPVSCSSNEGASS) show a composition bias toward polar residues. Over residues 88-102 (QDEKSLGSSREAEGW) the composition is skewed to basic and acidic residues. An interaction with LNX1 region spans residues 100-343 (EGWKEDPLNK…TTSSSFSHAK (244 aa)). The MAGE domain maps to 107 to 306 (LNKKVVSLVH…SAFPSCYEEA (200 aa)). The disordered stretch occupies residues 313–343 (RTQARAAARAHTAAMANARSRTTSSSFSHAK). Positions 316-333 (ARAAARAHTAAMANARSR) are enriched in low complexity. The segment covering 334–343 (TTSSSFSHAK) has biased composition (polar residues).

Interacts with LNX1.

The protein localises to the cytoplasm. Functionally, may enhance ubiquitin ligase activity of RING-type zinc finger-containing E3 ubiquitin-protein ligases. Proposed to act through recruitment and/or stabilization of the Ubl-conjugating enzyme (E2) at the E3:substrate complex. In Homo sapiens (Human), this protein is Melanoma-associated antigen B18 (MAGEB18).